Reading from the N-terminus, the 82-residue chain is Sec-independent protein translocase protein TatA (82 aa).

The helical transmembrane segment at 1 to 21 threads the bilayer; that stretch reads MGGISIWQLLIIAVIIVLLFG. Residues 48-82 form a disordered region; it reads SAKDAKKDADFVPQNLEKKEAETVEKQKQNDKEQA.

This sequence belongs to the TatA/E family. In terms of assembly, the Tat system comprises two distinct complexes: a TatABC complex, containing multiple copies of TatA, TatB and TatC subunits, and a separate TatA complex, containing only TatA subunits. Substrates initially bind to the TatABC complex, which probably triggers association of the separate TatA complex to form the active translocon.

The protein resides in the cell inner membrane. Part of the twin-arginine translocation (Tat) system that transports large folded proteins containing a characteristic twin-arginine motif in their signal peptide across membranes. TatA could form the protein-conducting channel of the Tat system. The polypeptide is Sec-independent protein translocase protein TatA (Aliivibrio salmonicida (strain LFI1238) (Vibrio salmonicida (strain LFI1238))).